Here is a 1046-residue protein sequence, read N- to C-terminus: Phospholipase D zeta 2 (1046 aa).

In terms of domain architecture, PX spans 45–205; sequence PKAAIVSVSR…KEVCKFLEVS (161 aa). The 129-residue stretch at 215 to 343 folds into the PH domain; sequence SKMKEGYVTV…WVKAVDEAGC (129 aa). In terms of domain architecture, PLD phosphodiesterase 1 spans 472 to 499; that stretch reads YLWSHHEKIVIVDYQVCFIGGLDLCFGR. Residues histidine 477, lysine 479, and aspartate 484 contribute to the active site. Over residues 653 to 667 the composition is skewed to basic and acidic residues; that stretch reads GRGDLKLDSGARQDP. A disordered region spans residues 653–677; it reads GRGDLKLDSGARQDPGETSEESDLD. The region spanning 847-874 is the PLD phosphodiesterase 2 domain; it reads SQIYVHSKLMIVDDRIAVIGSSNINDRS. Catalysis depends on residues histidine 852, lysine 854, and aspartate 859.

Belongs to the phospholipase D family. PXPH-PLD subfamily. Does not require Ca(2+) or any other cation for activity. serves as cofactor. In terms of tissue distribution, expressed in seedlings, roots, leaves, stems and flowers. Highest expression in roots. Detected only in the meristematic regions up to 4 days after germination and then at later stages in all tissues.

The enzyme catalyses a 1,2-diacyl-sn-glycero-3-phosphocholine + H2O = a 1,2-diacyl-sn-glycero-3-phosphate + choline + H(+). In terms of biological role, hydrolyzes glycerol-phospholipids at the terminal phosphodiesteric bond to generate phosphatidic acids (PA). Phosphatidylcholine-selective. Regulates vesicle trafficking and auxin responses. Required for the normal cycling of PIN-2 containing vesicles. Contributes to the supply of inorganic phosphorus for cell metabolism and diacylglycerol moieties for galactolipid synthesis in phosphorus-starved roots. Involved in root elongation during phosphate limitation. In Arabidopsis thaliana (Mouse-ear cress), this protein is Phospholipase D zeta 2.